The primary structure comprises 1477 residues: Neuralized-like protein 4 (1477 aa).

Disordered regions lie at residues 1 to 26 (MAEL…RKQP) and 168 to 196 (QPPP…RPDK). The NHR 1 domain maps to 1–167 (MAELHPRTGK…KCTQITVLSC (167 aa)). Over residues 171 to 183 (PEEEEEEDAEEQE) the composition is skewed to acidic residues. 4 NHR domains span residues 250–417 (ALLF…IVHN), 450–616 (QLLF…IMDE), 645–813 (DLRF…LTGG), and 841–1010 (SHRF…TVSS). The disordered stretch occupies residues 1012-1041 (LLEEPDATKPPSITSESEEEEDPADHGDPH). An NHR 6 domain is found at 1048–1211 (SLQFLANHGK…QCEQVSIVTG (164 aa)).

Ubiquitinated. This ubiquitination leads to proteasomal degradation.

It is found in the cytoplasm. The protein resides in the cytoskeleton. Its subcellular location is the microtubule organizing center. It localises to the centrosome. The protein localises to the centriole. In terms of biological role, promotes CCP110 ubiquitination and proteasome-dependent degradation. By counteracting accumulation of CP110, maintains normal centriolar homeostasis and preventing formation of ectopic microtubular organizing centers. In Xenopus tropicalis (Western clawed frog), this protein is Neuralized-like protein 4 (neurl4).